A 479-amino-acid polypeptide reads, in one-letter code: Ribosomal RNA small subunit methyltransferase F (479 aa).

Residues 125–131, E149, G177, and D194 contribute to the S-adenosyl-L-methionine site; that span reads AAAPGSK. C247 functions as the Nucleophile in the catalytic mechanism.

Belongs to the class I-like SAM-binding methyltransferase superfamily. RsmB/NOP family.

It is found in the cytoplasm. The enzyme catalyses cytidine(1407) in 16S rRNA + S-adenosyl-L-methionine = 5-methylcytidine(1407) in 16S rRNA + S-adenosyl-L-homocysteine + H(+). In terms of biological role, specifically methylates the cytosine at position 1407 (m5C1407) of 16S rRNA. In Shigella flexneri serotype 5b (strain 8401), this protein is Ribosomal RNA small subunit methyltransferase F.